A 72-amino-acid polypeptide reads, in one-letter code: MLVITRKKGESLLIGDDIEITVVKLDDGSVKLAIDAPKKLTILRKELYNEVQEENKKATNFNPSILKNIKSK.

It belongs to the CsrA/RsmA family. In terms of assembly, homodimer; the beta-strands of each monomer intercalate to form a hydrophobic core, while the alpha-helices form wings that extend away from the core.

The protein resides in the cytoplasm. Its function is as follows. A translational regulator that binds mRNA to regulate translation initiation and/or mRNA stability. Usually binds in the 5'-UTR at or near the Shine-Dalgarno sequence preventing ribosome-binding, thus repressing translation. Its main target seems to be the major flagellin gene, while its function is anatagonized by FliW. The chain is Translational regulator CsrA from Clostridium botulinum (strain 657 / Type Ba4).